Here is a 192-residue protein sequence, read N- to C-terminus: Type-4 uracil-DNA glycosylase (192 aa).

[4Fe-4S] cluster is bound by residues C18 and C21. Uracil contacts are provided by residues 45 to 47 (GEG), F59, and N85. C89 and C105 together coordinate [4Fe-4S] cluster. H161 contributes to the uracil binding site.

Belongs to the uracil-DNA glycosylase (UDG) superfamily. Type 4 (UDGa) family.

It carries out the reaction Hydrolyzes single-stranded DNA or mismatched double-stranded DNA and polynucleotides, releasing free uracil.. Removes uracil bases that are present in DNA as a result of either deamination of cytosine or misincorporation of dUMP instead of dTMP. Can remove uracil from double-stranded DNA containing either a U/G or U/A base pair as well as from single-stranded DNA. The chain is Type-4 uracil-DNA glycosylase from Thermotoga maritima (strain ATCC 43589 / DSM 3109 / JCM 10099 / NBRC 100826 / MSB8).